Here is a 150-residue protein sequence, read N- to C-terminus: Large ribosomal subunit protein bL9 (150 aa).

Belongs to the bacterial ribosomal protein bL9 family.

Binds to the 23S rRNA. The sequence is that of Large ribosomal subunit protein bL9 from Paraburkholderia phymatum (strain DSM 17167 / CIP 108236 / LMG 21445 / STM815) (Burkholderia phymatum).